We begin with the raw amino-acid sequence, 313 residues long: Malate dehydrogenase (313 aa).

NAD(+) contacts are provided by residues 11-16 (GSGNIG) and Asp35. Residues Arg84 and Arg90 each contribute to the substrate site. Residues Asn97 and 120–122 (VTN) contribute to the NAD(+) site. Residues Asn122 and Arg153 each coordinate substrate. His177 acts as the Proton acceptor in catalysis.

It belongs to the LDH/MDH superfamily. MDH type 3 family.

The catalysed reaction is (S)-malate + NAD(+) = oxaloacetate + NADH + H(+). Functionally, catalyzes the reversible oxidation of malate to oxaloacetate. This Ehrlichia ruminantium (strain Welgevonden) protein is Malate dehydrogenase.